We begin with the raw amino-acid sequence, 493 residues long: Cobyric acid synthase (493 aa).

In terms of domain architecture, GATase cobBQ-type spans 252–441; the sequence is DLKITVIRLP…LHGLLENGPW (190 aa). Residue Cys333 is the Nucleophile of the active site. His433 is an active-site residue.

It belongs to the CobB/CobQ family. CobQ subfamily.

The protein operates within cofactor biosynthesis; adenosylcobalamin biosynthesis. Functionally, catalyzes amidations at positions B, D, E, and G on adenosylcobyrinic A,C-diamide. NH(2) groups are provided by glutamine, and one molecule of ATP is hydrogenolyzed for each amidation. In Thermosynechococcus vestitus (strain NIES-2133 / IAM M-273 / BP-1), this protein is Cobyric acid synthase.